Here is a 90-residue protein sequence, read N- to C-terminus: Conotoxin TxMMSK-06 (90 aa).

Residues Met-1–Pro-22 form the signal peptide. The propeptide occupies Leu-23–Arg-74. Positions Asp-24 to Glu-43 are disordered. Basic and acidic residues predominate over residues Gly-25–Glu-43. 3 disulfides stabilise this stretch: Cys-75/Cys-89, Cys-76/Cys-85, and Cys-81/Cys-88. Pro-87 is subject to 4-hydroxyproline. A Cysteine amide modification is found at Cys-89.

It belongs to the conotoxin M superfamily. In terms of tissue distribution, expressed by the venom duct.

The protein resides in the secreted. The chain is Conotoxin TxMMSK-06 from Conus textile (Cloth-of-gold cone).